A 431-amino-acid polypeptide reads, in one-letter code: Tol-Pal system protein TolB (431 aa).

The N-terminal stretch at 1–18 (MKALLLSLLLLLPVVALA) is a signal peptide. Residues 410-431 (LPLRTEKGTYQTPDWSPLPQAQ) form a disordered region.

This sequence belongs to the TolB family. As to quaternary structure, the Tol-Pal system is composed of five core proteins: the inner membrane proteins TolA, TolQ and TolR, the periplasmic protein TolB and the outer membrane protein Pal. They form a network linking the inner and outer membranes and the peptidoglycan layer.

The protein localises to the periplasm. Functionally, part of the Tol-Pal system, which plays a role in outer membrane invagination during cell division and is important for maintaining outer membrane integrity. This is Tol-Pal system protein TolB from Myxococcus xanthus.